The sequence spans 392 residues: S-adenosylmethionine synthase (392 aa).

An ATP-binding site is contributed by His17. Residue Asp19 coordinates Mg(2+). Glu45 contributes to the K(+) binding site. The L-methionine site is built by Glu58 and Gln102. A flexible loop region spans residues 102-112; the sequence is QSADIAQGVDA. Residues 169 to 171, 235 to 236, Asp244, 250 to 251, Ala267, and Lys271 contribute to the ATP site; these read DAK, KF, and RK. Residue Asp244 coordinates L-methionine. An L-methionine-binding site is contributed by Lys275.

This sequence belongs to the AdoMet synthase family. In terms of assembly, homotetramer; dimer of dimers. Mg(2+) is required as a cofactor. K(+) serves as cofactor.

It localises to the cytoplasm. It carries out the reaction L-methionine + ATP + H2O = S-adenosyl-L-methionine + phosphate + diphosphate. The protein operates within amino-acid biosynthesis; S-adenosyl-L-methionine biosynthesis; S-adenosyl-L-methionine from L-methionine: step 1/1. Functionally, catalyzes the formation of S-adenosylmethionine (AdoMet) from methionine and ATP. The overall synthetic reaction is composed of two sequential steps, AdoMet formation and the subsequent tripolyphosphate hydrolysis which occurs prior to release of AdoMet from the enzyme. This Methylobacterium sp. (strain 4-46) protein is S-adenosylmethionine synthase.